Consider the following 238-residue polypeptide: Uridylate kinase (238 aa).

An ATP-binding site is contributed by 12–15; sequence KLSG. Residues 20–25 form an involved in allosteric activation by GTP region; sequence GEKGFG. Gly-54 lines the UMP pocket. ATP-binding residues include Gly-55 and Arg-59. UMP is bound by residues Asp-74 and 135–142; that span reads TGSPYFST. ATP contacts are provided by Asn-163, Tyr-169, and Asp-172.

It belongs to the UMP kinase family. As to quaternary structure, homohexamer.

It localises to the cytoplasm. The catalysed reaction is UMP + ATP = UDP + ADP. It participates in pyrimidine metabolism; CTP biosynthesis via de novo pathway; UDP from UMP (UMPK route): step 1/1. With respect to regulation, allosterically activated by GTP. Inhibited by UTP. Its function is as follows. Catalyzes the reversible phosphorylation of UMP to UDP. The chain is Uridylate kinase from Lactococcus lactis subsp. lactis (strain IL1403) (Streptococcus lactis).